The chain runs to 532 residues: SET and MYND domain-containing protein DDB_G0288495 (532 aa).

One can recognise an SET domain in the interval 25–448 (PWIEVKSVSE…ENQELLITYI (424 aa)). An MYND-type; degenerate zinc finger spans residues 70 to 116 (CTTCFKILLESNRHNFQTCPSCFQVNYCSNYCKQYSKIETKHTELEC). A coiled-coil region spans residues 199 to 240 (INSKNNNEFENEEEEEEEQEQKGEGEQEENENNENNEKVKKK). Residues 204 to 234 (NNEFENEEEEEEEQEQKGEGEQEENENNENN) form a disordered region. The span at 207–217 (FENEEEEEEEQ) shows a compositional bias: acidic residues.

It belongs to the class V-like SAM-binding methyltransferase superfamily.

Probable methyltransferase. This chain is SET and MYND domain-containing protein DDB_G0288495, found in Dictyostelium discoideum (Social amoeba).